The sequence spans 72 residues: SRY-related protein AES2 (72 aa).

Positions 1-69 (VKRPMNAFMV…KHMADYPDYK (69 aa)) form a DNA-binding region, HMG box.

It localises to the nucleus. This Alligator mississippiensis (American alligator) protein is SRY-related protein AES2.